A 1363-amino-acid polypeptide reads, in one-letter code: Homeobox protein 13 (1363 aa).

The stretch at 15–73 forms a coiled coil; the sequence is FVMEQIQQQQQQQQQQQQQQQQQQQQQQQQQQQQLQQQQQQQQQQQQQQQQQQQQQQQN. 9 disordered regions span residues 66–96, 120–177, 308–437, 621–731, 765–818, 857–911, 1001–1137, 1166–1202, and 1270–1341; these read QQQQQQQNPKMNNQPNETRLPSPPLLNSTVP, SQHA…INGS, INGT…YHGG, LNSP…QHQQ, HHHH…PQHS, SINS…SNSI, QNYN…TLIN, NFINNNSNNNNNMEIDDDDEDGIDGIEGEDDSKKRMR, and ISFG…TLIS. The segment covering 73-96 has biased composition (polar residues); the sequence is NPKMNNQPNETRLPSPPLLNSTVP. Low complexity predominate over residues 132 to 147; that stretch reads SLNSSNNNNNNNFNNS. Positions 148-158 are enriched in polar residues; the sequence is RPTFSSCSGNS. 2 stretches are compositionally biased toward low complexity: residues 159–177 and 315–326; these read NNTTTTTTTTTTTNPINGS and SNHSNNNNNNNN. Basic residues predominate over residues 327-339; the sequence is NHHHHHHHHHQKR. Residues 348 to 378 are compositionally biased toward low complexity; that stretch reads TNHLTPLPLLHKHTNNNNNINNNNNHNHNNI. Over residues 379–393 the composition is skewed to polar residues; sequence LGSPNQLNRSQDFTS. Low complexity-rich tracts occupy residues 394–408, 415–426, 641–693, 709–731, and 770–793; these read KNNNINNNNNNNNKI, NKGSPNQNSSEN, NNNS…NNNI, HHQQQLQHQQHQQQQLLHQQHQQ, and QQQQQQQQQQQHNNNNNNNNSNHN. The stretch at 738-789 forms a coiled coil; sequence QQQLQIQYQQQQTHNNNLNQTQQLYYNHHHHQQQQQQQQQQQQHNNNNNNNN. 2 stretches are compositionally biased toward polar residues: residues 794 to 818 and 857 to 883; these read SVLTSPPLSQFPKTPLQLSQTPQHS and SINSNSGMSLPMISSPSPNLSHMQKNR. Low complexity-rich tracts occupy residues 889 to 911, 1001 to 1031, and 1045 to 1063; these read ILNSSLSSSNTTNSATTSSSNSI, QNYNENNNNNNNNNNNNYNINNINNNNNNNF, and NINNNNNNNNNNNNNNNNN. A compositionally biased stretch (basic and acidic residues) spans 1064–1078; sequence KNDKNESEFESKEKL. Polar residues predominate over residues 1081 to 1095; it reads PFGSSIPNIVNNEQL. Composition is skewed to low complexity over residues 1096 to 1116, 1123 to 1137, and 1166 to 1177; these read SPYSQQSLSSSSSENPSPQWS, TSSSKLSNSTSTLIN, and NFINNNSNNNNN. The segment covering 1179–1195 has biased composition (acidic residues); it reads EIDDDDEDGIDGIEGED. Positions 1198 to 1261 form a DNA-binding region, homeobox; sequence KKRMRKTTRP…NRRTKDKLKN (64 aa). Positions 1275-1294 are enriched in low complexity; the sequence is SSTSSTQTSTNSPSSQLSPL. Residues 1297–1316 are compositionally biased toward polar residues; the sequence is NMNNNDQQSISTPSLILSQI. Residues 1317-1334 are compositionally biased toward low complexity; it reads NNNQNNNQNNNNNNNTNN.

The protein resides in the nucleus. In terms of biological role, putative transcription factor. This Dictyostelium discoideum (Social amoeba) protein is Homeobox protein 13 (hbx13).